Here is a 309-residue protein sequence, read N- to C-terminus: Porphobilinogen deaminase (309 aa).

The residue at position 243 (Cys243) is an S-(dipyrrolylmethanemethyl)cysteine.

The protein belongs to the HMBS family. In terms of assembly, monomer. The cofactor is dipyrromethane.

The catalysed reaction is 4 porphobilinogen + H2O = hydroxymethylbilane + 4 NH4(+). Its pathway is porphyrin-containing compound metabolism; protoporphyrin-IX biosynthesis; coproporphyrinogen-III from 5-aminolevulinate: step 2/4. Tetrapolymerization of the monopyrrole PBG into the hydroxymethylbilane pre-uroporphyrinogen in several discrete steps. In Deinococcus geothermalis (strain DSM 11300 / CIP 105573 / AG-3a), this protein is Porphobilinogen deaminase.